The following is a 394-amino-acid chain: ATP phosphoribosyltransferase regulatory subunit (394 aa).

Belongs to the class-II aminoacyl-tRNA synthetase family. HisZ subfamily. In terms of assembly, heteromultimer composed of HisG and HisZ subunits.

The protein localises to the cytoplasm. Its pathway is amino-acid biosynthesis; L-histidine biosynthesis; L-histidine from 5-phospho-alpha-D-ribose 1-diphosphate: step 1/9. Required for the first step of histidine biosynthesis. May allow the feedback regulation of ATP phosphoribosyltransferase activity by histidine. This Teredinibacter turnerae (strain ATCC 39867 / T7901) protein is ATP phosphoribosyltransferase regulatory subunit.